Reading from the N-terminus, the 483-residue chain is Probable glycine dehydrogenase (decarboxylating) subunit 2 (483 aa).

The disordered stretch occupies residues 1–33 (MLIFEHSRKNRRNYSQAPATRPAKNNIPDHLKR). The residue at position 264 (Lys-264) is an N6-(pyridoxal phosphate)lysine.

The protein belongs to the GcvP family. C-terminal subunit subfamily. In terms of assembly, the glycine cleavage system is composed of four proteins: P, T, L and H. In this organism, the P 'protein' is a heterodimer of two subunits. Pyridoxal 5'-phosphate serves as cofactor.

The catalysed reaction is N(6)-[(R)-lipoyl]-L-lysyl-[glycine-cleavage complex H protein] + glycine + H(+) = N(6)-[(R)-S(8)-aminomethyldihydrolipoyl]-L-lysyl-[glycine-cleavage complex H protein] + CO2. Its function is as follows. The glycine cleavage system catalyzes the degradation of glycine. The P protein binds the alpha-amino group of glycine through its pyridoxal phosphate cofactor; CO(2) is released and the remaining methylamine moiety is then transferred to the lipoamide cofactor of the H protein. This Nitrosomonas europaea (strain ATCC 19718 / CIP 103999 / KCTC 2705 / NBRC 14298) protein is Probable glycine dehydrogenase (decarboxylating) subunit 2.